Consider the following 263-residue polypeptide: Trans-aconitate 2-methyltransferase (263 aa).

The protein belongs to the methyltransferase superfamily. Tam family.

It localises to the cytoplasm. The catalysed reaction is trans-aconitate + S-adenosyl-L-methionine = (E)-3-(methoxycarbonyl)pent-2-enedioate + S-adenosyl-L-homocysteine. Its function is as follows. Catalyzes the S-adenosylmethionine monomethyl esterification of trans-aconitate. The sequence is that of Trans-aconitate 2-methyltransferase from Mycobacterium ulcerans (strain Agy99).